A 57-amino-acid chain; its full sequence is Preprotein translocase subunit SecG (57 aa).

The Cytoplasmic segment spans residues 1–31 (MAKKKGEGPGLMSSAGLMRYFESEETSIKLD). A helical transmembrane segment spans residues 32-53 (PKMVIGAGIASGVAIMALNITF). Topologically, residues 54-57 (GLWP) are extracellular.

This sequence belongs to the SEC61-beta family. As to quaternary structure, component of the protein translocase complex. Heterotrimer consisting of alpha (SecY), beta (SecG) and gamma (SecE) subunits. Can form oligomers of the heterotrimer.

Its subcellular location is the cell membrane. Its function is as follows. Involved in protein export. The function of the beta subunit is unknown, but it may be involved in stabilization of the trimeric complex. This is Preprotein translocase subunit SecG from Methanothrix thermoacetophila (strain DSM 6194 / JCM 14653 / NBRC 101360 / PT) (Methanosaeta thermophila).